We begin with the raw amino-acid sequence, 433 residues long: UPF0761 membrane protein Sde_0901 (433 aa).

The next 6 membrane-spanning stretches (helical) occupy residues 46–66, 103–123, 142–162, 185–205, 217–237, and 247–267; these read LFAMVPLMAVFYSMFSMFPAF, LSAAGAGLLVVTAYLMLTNIE, FLLYWAVLTIGPLLLGAGLAM, FFSYLPLFTTSAAFTLLFAAV, IGGILTAVCFELLKIGFGWVV, and GAFAVVPLFLLWVNLLWMIIL.

The protein belongs to the UPF0761 family.

It is found in the cell inner membrane. The sequence is that of UPF0761 membrane protein Sde_0901 from Saccharophagus degradans (strain 2-40 / ATCC 43961 / DSM 17024).